The sequence spans 120 residues: Chemokine vCXCL1 (120 aa).

It belongs to the intercrine alpha (chemokine CxC) family. Interacts with host CXCR1 and CXCR2.

Functionally, acts as a functional chemokine, inducing calcium mobilization, chemotaxis, and degranulation of neutrophils. Contributes to the induction of neutrophil chemotaxis by interacting with host CXCR1 and CXCR2 receptors. This chain is Chemokine vCXCL1 (UL146), found in Human cytomegalovirus (strain Merlin) (HHV-5).